Consider the following 338-residue polypeptide: tRNA-specific 2-thiouridylase MnmA (338 aa).

ATP-binding positions include 6-13 and methionine 32; that span reads ALSGGVDS. Cysteine 92 acts as the Nucleophile in catalysis. The cysteines at positions 92 and 186 are disulfide-linked. An ATP-binding site is contributed by glycine 116. The interaction with tRNA stretch occupies residues 134–136; the sequence is KDQ. The active-site Cysteine persulfide intermediate is the cysteine 186. The interaction with tRNA stretch occupies residues 288-289; sequence RY.

This sequence belongs to the MnmA/TRMU family.

The protein localises to the cytoplasm. The enzyme catalyses S-sulfanyl-L-cysteinyl-[protein] + uridine(34) in tRNA + AH2 + ATP = 2-thiouridine(34) in tRNA + L-cysteinyl-[protein] + A + AMP + diphosphate + H(+). Functionally, catalyzes the 2-thiolation of uridine at the wobble position (U34) of tRNA, leading to the formation of s(2)U34. This is tRNA-specific 2-thiouridylase MnmA from Campylobacter fetus subsp. fetus (strain 82-40).